A 969-amino-acid chain; its full sequence is RNA polymerase-associated protein RapA (969 aa).

The region spanning 164 to 334 (EVGRRHAPRV…FARLRLLDSD (171 aa)) is the Helicase ATP-binding domain. Position 177-184 (177-184 (DEVGLGKT)) interacts with ATP. The DEAH box motif lies at 280-283 (DEAH). In terms of domain architecture, Helicase C-terminal spans 492–668 (RVNWLLEKLK…GSNEALNDVI (177 aa)).

This sequence belongs to the SNF2/RAD54 helicase family. RapA subfamily. In terms of assembly, interacts with the RNAP. Has a higher affinity for the core RNAP than for the holoenzyme. Its ATPase activity is stimulated by binding to RNAP.

Transcription regulator that activates transcription by stimulating RNA polymerase (RNAP) recycling in case of stress conditions such as supercoiled DNA or high salt concentrations. Probably acts by releasing the RNAP, when it is trapped or immobilized on tightly supercoiled DNA. Does not activate transcription on linear DNA. Probably not involved in DNA repair. The protein is RNA polymerase-associated protein RapA of Vibrio vulnificus (strain YJ016).